The sequence spans 322 residues: ATP-dependent 6-phosphofructokinase (322 aa).

Residue glycine 11 participates in ATP binding. Arginine 21–arginine 25 is a binding site for ADP. Residues arginine 72 to cysteine 73 and glycine 102 to serine 105 contribute to the ATP site. Aspartate 103 lines the Mg(2+) pocket. Residue threonine 127–aspartate 129 participates in substrate binding. Aspartate 129 serves as the catalytic Proton acceptor. Arginine 156 contributes to the ADP binding site. Residues arginine 164 and methionine 171 to arginine 173 contribute to the substrate site. ADP-binding positions include glycine 187–glutamate 189, arginine 213, and lysine 215–histidine 217. Residues glutamate 224, arginine 245, and histidine 251–arginine 254 contribute to the substrate site.

Belongs to the phosphofructokinase type A (PFKA) family. ATP-dependent PFK group I subfamily. Prokaryotic clade 'B1' sub-subfamily. In terms of assembly, homotetramer. It depends on Mg(2+) as a cofactor.

It is found in the cytoplasm. The enzyme catalyses beta-D-fructose 6-phosphate + ATP = beta-D-fructose 1,6-bisphosphate + ADP + H(+). It functions in the pathway carbohydrate degradation; glycolysis; D-glyceraldehyde 3-phosphate and glycerone phosphate from D-glucose: step 3/4. With respect to regulation, allosterically activated by ADP and other diphosphonucleosides, and allosterically inhibited by phosphoenolpyruvate. In terms of biological role, catalyzes the phosphorylation of D-fructose 6-phosphate to fructose 1,6-bisphosphate by ATP, the first committing step of glycolysis. In Staphylococcus epidermidis (strain ATCC 12228 / FDA PCI 1200), this protein is ATP-dependent 6-phosphofructokinase.